The following is a 113-amino-acid chain: MKKSISVLRKESQIKNFISTIITNELTNANIYNPTVTDVVLSTDLGHVKVFLAFSSKENDGLDAVKNASGYIRKRLSKTLNWRKVPELHFYIDEVEKKAFEIDQILNSLKNEE.

Belongs to the RbfA family. Monomer. Binds 30S ribosomal subunits, but not 50S ribosomal subunits or 70S ribosomes.

Its subcellular location is the cytoplasm. In terms of biological role, one of several proteins that assist in the late maturation steps of the functional core of the 30S ribosomal subunit. Associates with free 30S ribosomal subunits (but not with 30S subunits that are part of 70S ribosomes or polysomes). Required for efficient processing of 16S rRNA. May interact with the 5'-terminal helix region of 16S rRNA. The chain is Ribosome-binding factor A from Mycoplasmopsis agalactiae (strain NCTC 10123 / CIP 59.7 / PG2) (Mycoplasma agalactiae).